A 274-amino-acid chain; its full sequence is Undecaprenyl-diphosphatase (274 aa).

A run of 8 helical transmembrane segments spans residues 4 to 24 (LLVI…LLPI), 46 to 66 (VVFE…EYRV), 86 to 106 (INVA…SDFI), 109 to 129 (VLFS…IIMW), 145 to 165 (ISYA…IPGT), 188 to 208 (FSFF…LWEA), 214 to 234 (IEDM…TFAV), and 250 to 270 (FAWY…TGVI).

This sequence belongs to the UppP family.

It localises to the cell inner membrane. The enzyme catalyses di-trans,octa-cis-undecaprenyl diphosphate + H2O = di-trans,octa-cis-undecaprenyl phosphate + phosphate + H(+). Catalyzes the dephosphorylation of undecaprenyl diphosphate (UPP). Confers resistance to bacitracin. The polypeptide is Undecaprenyl-diphosphatase (Cellvibrio japonicus (strain Ueda107) (Pseudomonas fluorescens subsp. cellulosa)).